The primary structure comprises 204 residues: MANPIKIGIGGPVGAGKTQLIEKVVKRLSKEMSIGVITNDIYTKEDEKILVNSGVLPESRIIGVETGGCPHTAIREDASMNFAAIDELLERHDDIELIFIESGGDNLAATFSPELVDFSIYIIDVAQGEKIPRKGGQGMIKSDFFVINKTDLAPYVGASLEQMAEDTKVFRGKRPFTFTNLKTDEGLDEVIDWIERDTLLKGLS.

Residue 11-18 participates in GTP binding; that stretch reads GPVGAGKT.

It belongs to the SIMIBI class G3E GTPase family. UreG subfamily. In terms of assembly, homodimer. UreD, UreF and UreG form a complex that acts as a GTP-hydrolysis-dependent molecular chaperone, activating the urease apoprotein by helping to assemble the nickel containing metallocenter of UreC. The UreE protein probably delivers the nickel.

It localises to the cytoplasm. Functionally, facilitates the functional incorporation of the urease nickel metallocenter. This process requires GTP hydrolysis, probably effectuated by UreG. The sequence is that of Urease accessory protein UreG from Staphylococcus aureus (strain Mu3 / ATCC 700698).